A 354-amino-acid polypeptide reads, in one-letter code: 3'-5' exonuclease (354 aa).

The interval 1–120 (MEKYLIKMPI…PSPEKEKPEK (120 aa)) is disordered. Composition is skewed to basic and acidic residues over residues 13-23 (KASEVPKDKAV), 36-50 (TKND…KENA), and 71-91 (KNLD…ENPP). 3 positions are modified to phosphoserine: serine 104, serine 110, and serine 112. The 169-residue stretch at 146-314 (VLQWVEKQKD…GQVIYRELER (169 aa)) folds into the 3'-5' exonuclease domain. Mg(2+)-binding residues include aspartate 163, glutamate 165, and aspartate 301.

The protein belongs to the WRNexo family.

It localises to the nucleus. Functionally, has exonuclease activity on both single-stranded and duplex templates bearing overhangs, but not blunt ended duplex DNA, and cleaves in a 3'-5' direction. Essential for the formation of DNA replication focal centers. Has an important role in maintaining genome stability. The sequence is that of 3'-5' exonuclease from Drosophila erecta (Fruit fly).